The sequence spans 246 residues: 23S rRNA (guanosine-2'-O-)-methyltransferase RlmB (246 aa).

Residues glycine 197, isoleucine 217, and leucine 226 each contribute to the S-adenosyl-L-methionine site.

Belongs to the class IV-like SAM-binding methyltransferase superfamily. RNA methyltransferase TrmH family. RlmB subfamily.

It localises to the cytoplasm. The catalysed reaction is guanosine(2251) in 23S rRNA + S-adenosyl-L-methionine = 2'-O-methylguanosine(2251) in 23S rRNA + S-adenosyl-L-homocysteine + H(+). In terms of biological role, specifically methylates the ribose of guanosine 2251 in 23S rRNA. The sequence is that of 23S rRNA (guanosine-2'-O-)-methyltransferase RlmB from Haemophilus ducreyi (strain 35000HP / ATCC 700724).